Reading from the N-terminus, the 39-residue chain is uncharacterized protein (39 aa).

A signal peptide spans 1 to 21 (MHLRSRWWLALLYCKDPVSRS).

This is an uncharacterized protein from Saccharomyces cerevisiae (strain ATCC 204508 / S288c) (Baker's yeast).